Reading from the N-terminus, the 330-residue chain is Biotin synthase 2 (330 aa).

The Radical SAM core domain occupies 48 to 278 (MCGDGFDMCS…QAAIRLAGGR (231 aa)). Cys-66, Cys-70, and Cys-73 together coordinate [4Fe-4S] cluster. The [2Fe-2S] cluster site is built by Ser-111, Cys-143, Cys-203, and Arg-273.

It belongs to the radical SAM superfamily. Biotin synthase family. As to quaternary structure, homodimer. It depends on [4Fe-4S] cluster as a cofactor. [2Fe-2S] cluster is required as a cofactor.

It catalyses the reaction (4R,5S)-dethiobiotin + (sulfur carrier)-SH + 2 reduced [2Fe-2S]-[ferredoxin] + 2 S-adenosyl-L-methionine = (sulfur carrier)-H + biotin + 2 5'-deoxyadenosine + 2 L-methionine + 2 oxidized [2Fe-2S]-[ferredoxin]. Its pathway is cofactor biosynthesis; biotin biosynthesis; biotin from 7,8-diaminononanoate: step 2/2. In terms of biological role, catalyzes the conversion of dethiobiotin (DTB) to biotin by the insertion of a sulfur atom into dethiobiotin via a radical-based mechanism. This chain is Biotin synthase 2, found in Corynebacterium diphtheriae (strain ATCC 700971 / NCTC 13129 / Biotype gravis).